We begin with the raw amino-acid sequence, 900 residues long: Alanine--tRNA ligase (900 aa).

4 residues coordinate Zn(2+): histidine 604, histidine 608, cysteine 708, and histidine 712.

Belongs to the class-II aminoacyl-tRNA synthetase family. Zn(2+) serves as cofactor.

It localises to the cytoplasm. It carries out the reaction tRNA(Ala) + L-alanine + ATP = L-alanyl-tRNA(Ala) + AMP + diphosphate. In terms of biological role, catalyzes the attachment of alanine to tRNA(Ala) in a two-step reaction: alanine is first activated by ATP to form Ala-AMP and then transferred to the acceptor end of tRNA(Ala). Also edits incorrectly charged Ser-tRNA(Ala) and Gly-tRNA(Ala) via its editing domain. The chain is Alanine--tRNA ligase from Saccharolobus islandicus (strain Y.G.57.14 / Yellowstone #1) (Sulfolobus islandicus).